The chain runs to 90 residues: DNA-binding protein HU-alpha (90 aa).

Belongs to the bacterial histone-like protein family. Heterodimer of an alpha and a beta chain.

Histone-like DNA-binding protein which is capable of wrapping DNA to stabilize it, and thus to prevent its denaturation under extreme environmental conditions. This is DNA-binding protein HU-alpha (hupA) from Aeromonas hydrophila.